The chain runs to 98 residues: Integration host factor subunit alpha (98 aa).

The protein belongs to the bacterial histone-like protein family. As to quaternary structure, heterodimer of an alpha and a beta chain.

This protein is one of the two subunits of integration host factor, a specific DNA-binding protein that functions in genetic recombination as well as in transcriptional and translational control. The polypeptide is Integration host factor subunit alpha (Marinomonas sp. (strain MWYL1)).